The primary structure comprises 679 residues: Palmitoyltransferase ERF2 (679 aa).

3 disordered regions span residues 1–181 (MASK…SQMR), 194–250 (RQMS…MSSD), and 267–338 (LSNL…SQKS). Over 1-368 (MASKPDDDGF…WQNTRGRPIN (368 aa)) the chain is Cytoplasmic. 2 stretches are compositionally biased toward polar residues: residues 44-57 (VQNNRLSIPQSTDM) and 66-82 (TGASSSRGPWQSQSLRN). Low complexity-rich tracts occupy residues 103 to 114 (STSQPPSLSSRS) and 143 to 167 (PSTMSQMSAAASPSSPTSPTSPTSP). A compositionally biased stretch (polar residues) spans 291–301 (NDGQLSQNRST). Residues 369–389 (IATGIFVVVPCALFFGFEAPW) form a helical membrane-spanning segment. Topologically, residues 390-393 (LWNN) are lumenal. Residues 394-414 (VSPAIPIVFAYLAYICFSSFI) form a helical membrane-spanning segment. Over 415–511 (HASVTDPGIL…NNCVGKRNYR (97 aa)) the chain is Cytoplasmic. Positions 468 to 518 (KHCRTCNIWRPPRAHHCRLCDNCIETHDHHCVWLNNCVGKRNYRYFFTFVT) constitute a DHHC domain. C498 (S-palmitoyl cysteine intermediate) is an active-site residue. A helical membrane pass occupies residues 512 to 532 (YFFTFVTSATVLAAYLIATSL). The Lumenal portion of the chain corresponds to 533 to 554 (TQILLYRNRQGISFGQAVDHFR). A helical membrane pass occupies residues 555–575 (VPFALVFLGFITFLYPAALMG). Over 576–679 (YHIFLMARGE…PVSLRNDTPH (104 aa)) the chain is Cytoplasmic. The disordered stretch occupies residues 640-679 (LGIRRDKRPRSSSQGLEMHDVNPGSSGFQGPVSLRNDTPH).

This sequence belongs to the DHHC palmitoyltransferase family. ERF2/ZDHHC9 subfamily. Autopalmitoylated.

The protein resides in the endoplasmic reticulum membrane. It carries out the reaction L-cysteinyl-[protein] + hexadecanoyl-CoA = S-hexadecanoyl-L-cysteinyl-[protein] + CoA. In terms of biological role, palmitoyltransferase specific for Ras proteins. The chain is Palmitoyltransferase ERF2 (ERF2) from Gibberella zeae (strain ATCC MYA-4620 / CBS 123657 / FGSC 9075 / NRRL 31084 / PH-1) (Wheat head blight fungus).